Here is a 336-residue protein sequence, read N- to C-terminus: MSFNLHNRNLLSLIHHNARELRYLLDLARDLKRAKYSGTEQPRLLRKNIALIFEKTSTRTRCAFEVAAYDQGANVTYIDPASSQIGHKESMRDTARVLGRMYDAIEYRGFSQEIVEELAHHAGVPVFNGLTDEYHPTQMLADVMTMREHSDKPLHDIRYAYLGDARNNMGNSLLLIGAKLGMDVRIGAPKSLWPAADFIAQCEAFAAESGARLTLTEDPYEAVKGVDFIHTDVWVSMGEPVEAWDERINALLPYQVNRKLIESTGNPRTRFMHCLPSFHNCETKVGKQIAERYPHLKDGIEVTDEVFESPRCIAFEQAENRMHTIKAVLVSTLGGI.

Carbamoyl phosphate contacts are provided by residues 57–60 (STRT), Q84, R108, and 135–138 (HPTQ). Residues N168, D232, and 236-237 (SM) contribute to the L-ornithine site. Carbamoyl phosphate contacts are provided by residues 274–275 (CL) and R321.

It belongs to the aspartate/ornithine carbamoyltransferase superfamily. OTCase family.

The protein localises to the cytoplasm. The catalysed reaction is carbamoyl phosphate + L-ornithine = L-citrulline + phosphate + H(+). It functions in the pathway amino-acid degradation; L-arginine degradation via ADI pathway; carbamoyl phosphate from L-arginine: step 2/2. Reversibly catalyzes the transfer of the carbamoyl group from carbamoyl phosphate (CP) to the N(epsilon) atom of ornithine (ORN) to produce L-citrulline. The sequence is that of Ornithine carbamoyltransferase, catabolic from Burkholderia pseudomallei (strain K96243).